Reading from the N-terminus, the 224-residue chain is PKHD-type hydroxylase Sbal195_0750 (224 aa).

One can recognise a Fe2OG dioxygenase domain in the interval 78–176 (QFYPPLFNRY…RTAAFMWLQS (99 aa)). Fe cation contacts are provided by histidine 96, aspartate 98, and histidine 157. A 2-oxoglutarate-binding site is contributed by arginine 167.

It depends on Fe(2+) as a cofactor. Requires L-ascorbate as cofactor.

The polypeptide is PKHD-type hydroxylase Sbal195_0750 (Shewanella baltica (strain OS195)).